The sequence spans 581 residues: uncharacterized protein (581 aa).

At Ser-28 the chain carries Phosphoserine. Helical transmembrane passes span 61-81 (LVLI…AGSA), 100-120 (AGVL…ATFL), 125-145 (CVYL…ALVK), 187-207 (IYIL…GYIA), 214-234 (WIGW…LFTF), 340-360 (IFLF…DAWL), 382-402 (AVAI…IYGG), 426-446 (LWLM…FGIG), 458-478 (VGLG…MAYL), 486-506 (VLEA…VFTF), and 522-542 (ISIG…ILCG).

It belongs to the major facilitator superfamily.

It localises to the cytoplasm. It is found in the cell cortex. The protein resides in the membrane. This is an uncharacterized protein from Schizosaccharomyces pombe (strain 972 / ATCC 24843) (Fission yeast).